A 261-amino-acid polypeptide reads, in one-letter code: MSRRYDSRTTIFSPEGRLYQVEYAMEAIGHAGTCLGILANDGVLLAAERRNIHKLLDEVFFSEKIYKLNEDMACSVAGITSDANVLTNELRLIAQRYLLQYQEPIPCEQLVTALCDIKQAYTQFGGKRPFGVSLLYIGWDKHYGFQLYQSDPSGNYGGWKATCIGNNSAAAVSMLKQDYKEGEMTLKSALALAVKVLNKTMDVSKLSAEKVEIATLTRENGKTVIRVLKQKEVEQLIKKHEEEEAKAEREKKEKEQREKDK.

S13 and S75 each carry phosphoserine. K127 carries the post-translational modification N6-acetyllysine. S173 bears the Phosphoserine mark. An N6-acetyllysine modification is found at K176. Residues H240 to K261 form a disordered region.

This sequence belongs to the peptidase T1A family. In terms of assembly, the 26S proteasome consists of a 20S proteasome core and two 19S regulatory subunits. The 20S proteasome core is a barrel-shaped complex made of 28 subunits that are arranged in four stacked rings. The two outer rings are each formed by seven alpha subunits, and the two inner rings are formed by seven beta subunits. The proteolytic activity is exerted by three beta-subunits PSMB5, PSMB6 and PSMB7. In terms of tissue distribution, ubiquitous.

The protein localises to the cytoplasm. The protein resides in the nucleus. In terms of biological role, component of the 20S core proteasome complex involved in the proteolytic degradation of most intracellular proteins. This complex plays numerous essential roles within the cell by associating with different regulatory particles. Associated with two 19S regulatory particles, forms the 26S proteasome and thus participates in the ATP-dependent degradation of ubiquitinated proteins. The 26S proteasome plays a key role in the maintenance of protein homeostasis by removing misfolded or damaged proteins that could impair cellular functions, and by removing proteins whose functions are no longer required. Associated with the PA200 or PA28, the 20S proteasome mediates ubiquitin-independent protein degradation. This type of proteolysis is required in several pathways including spermatogenesis (20S-PA200 complex) or generation of a subset of MHC class I-presented antigenic peptides (20S-PA28 complex). This chain is Proteasome subunit alpha type-4 (Psma4), found in Rattus norvegicus (Rat).